The primary structure comprises 322 residues: tRNA U34 carboxymethyltransferase (322 aa).

Carboxy-S-adenosyl-L-methionine-binding positions include K92, W106, K111, G131, 153–155 (DPT), 181–182 (VE), M196, Y200, and R315.

Belongs to the class I-like SAM-binding methyltransferase superfamily. CmoB family. In terms of assembly, homotetramer.

It catalyses the reaction carboxy-S-adenosyl-L-methionine + 5-hydroxyuridine(34) in tRNA = 5-carboxymethoxyuridine(34) in tRNA + S-adenosyl-L-homocysteine + H(+). Catalyzes carboxymethyl transfer from carboxy-S-adenosyl-L-methionine (Cx-SAM) to 5-hydroxyuridine (ho5U) to form 5-carboxymethoxyuridine (cmo5U) at position 34 in tRNAs. In Colwellia psychrerythraea (strain 34H / ATCC BAA-681) (Vibrio psychroerythus), this protein is tRNA U34 carboxymethyltransferase.